We begin with the raw amino-acid sequence, 335 residues long: NADH-quinone oxidoreductase subunit H (335 aa).

8 consecutive transmembrane segments (helical) span residues 11–31, 81–101, 114–134, 154–174, 187–207, 238–258, 270–290, and 307–327; these read VILT…AGAL, VIFT…FAII, IGLL…LFAG, VSYE…VGSF, LWFI…GVAV, FFVG…TLFF, QLSF…FILL, and WKFC…VVLW.

The protein belongs to the complex I subunit 1 family. In terms of assembly, NDH-1 is composed of 13 different subunits. Subunits NuoA, H, J, K, L, M, N constitute the membrane sector of the complex.

The protein resides in the cell inner membrane. The enzyme catalyses a quinone + NADH + 5 H(+)(in) = a quinol + NAD(+) + 4 H(+)(out). NDH-1 shuttles electrons from NADH, via FMN and iron-sulfur (Fe-S) centers, to quinones in the respiratory chain. The immediate electron acceptor for the enzyme in this species is believed to be ubiquinone. Couples the redox reaction to proton translocation (for every two electrons transferred, four hydrogen ions are translocated across the cytoplasmic membrane), and thus conserves the redox energy in a proton gradient. This subunit may bind ubiquinone. The sequence is that of NADH-quinone oxidoreductase subunit H from Pseudomonas fluorescens (strain ATCC BAA-477 / NRRL B-23932 / Pf-5).